The following is a 200-amino-acid chain: Putative hydrolase MhqD (200 aa).

Active-site charge relay system residues include Ser100, Asp150, and His181.

The protein belongs to the AB hydrolase superfamily. AB hydrolase 2 family.

It localises to the cytoplasm. In terms of biological role, putative hydrolase that may contribute to the degradation of aromatic compounds. The protein is Putative hydrolase MhqD (mhqD) of Bacillus subtilis (strain 168).